Consider the following 406-residue polypeptide: Cysteine desulfurase (406 aa).

K226 carries the N6-(pyridoxal phosphate)lysine modification. C364 acts as the Cysteine persulfide intermediate in catalysis.

It belongs to the class-V pyridoxal-phosphate-dependent aminotransferase family. Csd subfamily. As to quaternary structure, homodimer. Interacts with SufE and the SufBCD complex composed of SufB, SufC and SufD. The interaction with SufE is required to mediate the direct transfer of the sulfur atom from the S-sulfanylcysteine. It depends on pyridoxal 5'-phosphate as a cofactor.

Its subcellular location is the cytoplasm. The enzyme catalyses (sulfur carrier)-H + L-cysteine = (sulfur carrier)-SH + L-alanine. It carries out the reaction L-selenocysteine + AH2 = hydrogenselenide + L-alanine + A + H(+). The protein operates within cofactor biosynthesis; iron-sulfur cluster biosynthesis. Its function is as follows. Cysteine desulfurases mobilize the sulfur from L-cysteine to yield L-alanine, an essential step in sulfur metabolism for biosynthesis of a variety of sulfur-containing biomolecules. Component of the suf operon, which is activated and required under specific conditions such as oxidative stress and iron limitation. Acts as a potent selenocysteine lyase in vitro, that mobilizes selenium from L-selenocysteine. Selenocysteine lyase activity is however unsure in vivo. The protein is Cysteine desulfurase of Klebsiella pneumoniae (strain 342).